The primary structure comprises 656 residues: Anion exchange transporter (656 aa).

Residues 1-75 lie on the Cytoplasmic side of the membrane; the sequence is MTGAKRKKRS…LSFAMLSSVH (75 aa). The helical transmembrane segment at 76 to 96 threads the bilayer; sequence PVFGLYGSLFPAIIYAIFGMG. The Extracellular segment spans residues 97-144; sequence RHVATGTFALTSLISANAVERLVPQSSRNLTTQSNSSVLGLSEFELQR. A helical membrane pass occupies residues 145-165; it reads IGVAAAVSFLGGVIQLVMFVL. Q166 is a topological domain (cytoplasmic). Residues 167 to 187 form a helical membrane-spanning segment; it reads LGSATFLLTEPVISAMTTGAA. Topologically, residues 188-199 are extracellular; the sequence is THVVTSQVKYLL. A helical membrane pass occupies residues 200–220; it reads GIKMPYISGPLGFFYIYAYVF. Residues 221–222 are Cytoplasmic-facing; sequence EN. The helical transmembrane segment at 223–243 threads the bilayer; it reads IKSVQLEALLFSLLSIIVLVL. The Extracellular portion of the chain corresponds to 244 to 254; that stretch reads VKELNEQFKRK. A helical transmembrane segment spans residues 255 to 275; the sequence is IKVVLPVDLVLIIAASFACYC. The Cytoplasmic segment spans residues 276–306; sequence TNMENTYGLEVVGHIPNGIPPPRAPPMNILS. A helical membrane pass occupies residues 307-327; the sequence is AVLTEAFGVALVGYVASLALA. Topologically, residues 328–343 are extracellular; sequence QGSAKKFKYSVDDNQE. Residues 344–364 traverse the membrane as a helical segment; sequence FLAHGLSNVIPSFLFCIPSAA. The Cytoplasmic segment spans residues 365–383; that stretch reads AMGRTAGLYSTGAKTQVAC. Transmembrane regions (helical) follow at residues 384-404 and 405-425; these read LISCIFVLIVIYAIGPLLYWL and PMCVLASIIVVGLKGMLIQFR. Over 426 to 448 the chain is Extracellular; the sequence is DLKKYWNVDKIDWGIWISTYIFT. Residues 449–469 traverse the membrane as a helical segment; the sequence is ICFAANVGLLFGVICTIAIVL. The Cytoplasmic portion of the chain corresponds to 470–656; the sequence is GRFPRAKTLS…LSKASDHSEV (187 aa). The STAS domain occupies 492–641; the sequence is TEMHDETSQQ…DSVPAAISII (150 aa). The segment at 641 to 656 is membrane targeting; that stretch reads IQSNKNLSKASDHSEV.

Belongs to the SLC26A/SulP transporter (TC 2.A.53) family. Expressed in the Reissner's membrane epithelial cells in the cochlea (at protein level). Expressed in the retinal pigment epithelium (at protein level). Abundantly expressed in parietal cells on the glandular portion of the stomach. Lower levels are observed in the kidney, with expression in the proximal tubule and thick ascending limb of the loop of Henle. Also expressed in distal segments of nephron, in extraglomerular mesagial cells and a subpopulation of intercalated cells of outer medullary collecting ducts. Expressed in the thyroid gland.

It is found in the basolateral cell membrane. Its subcellular location is the recycling endosome membrane. The protein resides in the apical cell membrane. The protein localises to the lateral cell membrane. The catalysed reaction is chloride(in) = chloride(out). It catalyses the reaction iodide(out) = iodide(in). It carries out the reaction bromide(in) = bromide(out). The enzyme catalyses oxalate(in) = oxalate(out). The catalysed reaction is nitrate(in) = nitrate(out). It catalyses the reaction sulfate(in) = sulfate(out). It carries out the reaction hydrogencarbonate(in) = hydrogencarbonate(out). The enzyme catalyses D-gluconate(in) = D-gluconate(out). The catalysed reaction is thiocyanate(in) = thiocyanate(out). It catalyses the reaction hydrogencarbonate(in) + chloride(out) = hydrogencarbonate(out) + chloride(in). Regulated by pH. Activity inhibited by all inhibitors of several anion channels and transporters, including 4,4'-Di-isothiocyanatostilbene-2,2'-disulfonic acid (DIDS), diphenylamine-2-carboxylic acid, glybenclamide and 5-Nitro-2-(3-phenylpropyl-amino)benzoic acid. Its function is as follows. Acts as an anion channel mediating the transport of chloride, bromide, iodide, nitrate, sulfate, gluconate, thiocyanate and bicarbonate ions. Its permeability towards bicarbonate is weak and increases when pH is above 7. Mediates oxalate transport. Mediates thiocyanate transport in retinal pigment epithelium cells. Mediates iodide transport in the thyroid gland, playing an important role in the synthesis of thyroid hormones and the maintenance of thyroid function. Although it is an anion channel, according to PubMed:12736153 and PubMed:19723628 it has been shown to exhibit chloride-bicarbonate exchanger activity. The sequence is that of Anion exchange transporter from Mus musculus (Mouse).